The following is a 117-amino-acid chain: uncharacterized protein (117 aa).

This is an uncharacterized protein from Escherichia coli O157:H7.